Here is a 193-residue protein sequence, read N- to C-terminus: Ion-translocating oxidoreductase complex subunit A (193 aa).

Helical transmembrane passes span 5 to 25 (LLLLIGTVLVNNFVLVKFLGL), 39 to 59 (IGMGLATTFVLTLASVCSYLV), 67 to 87 (LGIEYLRTMSFILVIAVVVQF), 102 to 122 (VLGIFLPLITTNCAVLGVALL), 134 to 154 (IIYGFGAAVGFSLVLILFSAM), and 171 to 191 (SIAMITAGLMSLAFMGFTGLV).

It belongs to the NqrDE/RnfAE family. The complex is composed of six subunits: RnfA, RnfB, RnfC, RnfD, RnfE and RnfG.

The protein resides in the cell inner membrane. Part of a membrane-bound complex that couples electron transfer with translocation of ions across the membrane. In Aliivibrio fischeri (strain ATCC 700601 / ES114) (Vibrio fischeri), this protein is Ion-translocating oxidoreductase complex subunit A.